Here is a 336-residue protein sequence, read N- to C-terminus: Small ribosomal subunit protein uS2 (336 aa).

Belongs to the universal ribosomal protein uS2 family.

The chain is Small ribosomal subunit protein uS2 from Beijerinckia indica subsp. indica (strain ATCC 9039 / DSM 1715 / NCIMB 8712).